Reading from the N-terminus, the 37-residue chain is Esculentin-2L (37 aa).

Cysteine 31 and cysteine 37 are oxidised to a cystine.

Expressed by the skin glands.

The protein resides in the secreted. Antibacterial activity against Gram-positive bacterium S.aureus and Gram-negative bacterium E.coli. Has activity against C.albicans. In Rana luteiventris (Columbia spotted frog), this protein is Esculentin-2L.